Here is a 370-residue protein sequence, read N- to C-terminus: MSGNTLGLLFTVTTFGESHGPAIGAVVDGCPPGMDLTEADIQGDLDRRKPGTSRHVTQRKEPDQVEILSGVFEGKTTGTPICLLIRNTDQRSKDYGNIVETFRPGHADYTYWQKYGIRDYRGGGRSSARLTAPVVAAGAVAKKWLREQFGTEIRGYMSKLGEIEVPFSDWSHVPENPFFAANADIVPELETYMDALRRDGDSVGARIEVVASNVPVGLGEPLFDRLDADIAHAMMGLNAVKGVEIGAGFKSVEQRGSEHGDELTAQGFRGNNAGGILGGISTGQDITVSLAIKPTSSIRTPRESIDKAGNAATVETFGRHDPCVGIRATPIAEALLALVLVDHALRHRAQCGDVKVDTPRIPAQAPGQPG.

The disordered stretch occupies residues isoleucine 41–lysine 60. Positions 48 and 54 each coordinate NADP(+). FMN is bound by residues arginine 125–serine 127, asparagine 238–alanine 239, glycine 278, lysine 293–serine 297, and arginine 319.

It belongs to the chorismate synthase family. Homotetramer. FMNH2 serves as cofactor.

It carries out the reaction 5-O-(1-carboxyvinyl)-3-phosphoshikimate = chorismate + phosphate. The protein operates within metabolic intermediate biosynthesis; chorismate biosynthesis; chorismate from D-erythrose 4-phosphate and phosphoenolpyruvate: step 7/7. Its function is as follows. Catalyzes the anti-1,4-elimination of the C-3 phosphate and the C-6 proR hydrogen from 5-enolpyruvylshikimate-3-phosphate (EPSP) to yield chorismate, which is the branch point compound that serves as the starting substrate for the three terminal pathways of aromatic amino acid biosynthesis. This reaction introduces a second double bond into the aromatic ring system. The sequence is that of Chorismate synthase from Cupriavidus pinatubonensis (strain JMP 134 / LMG 1197) (Cupriavidus necator (strain JMP 134)).